A 426-amino-acid chain; its full sequence is Enolase (426 aa).

(2R)-2-phosphoglycerate is bound at residue Gln163. Glu205 acts as the Proton donor in catalysis. Asp242, Glu283, and Asp310 together coordinate Mg(2+). 4 residues coordinate (2R)-2-phosphoglycerate: Lys335, Arg364, Ser365, and Lys386. Catalysis depends on Lys335, which acts as the Proton acceptor.

This sequence belongs to the enolase family. Mg(2+) serves as cofactor.

It is found in the cytoplasm. The protein resides in the secreted. It localises to the cell surface. The enzyme catalyses (2R)-2-phosphoglycerate = phosphoenolpyruvate + H2O. It functions in the pathway carbohydrate degradation; glycolysis; pyruvate from D-glyceraldehyde 3-phosphate: step 4/5. Functionally, catalyzes the reversible conversion of 2-phosphoglycerate (2-PG) into phosphoenolpyruvate (PEP). It is essential for the degradation of carbohydrates via glycolysis. This chain is Enolase, found in Aquifex aeolicus (strain VF5).